The chain runs to 368 residues: Protein-glutamate methylesterase/protein-glutamine glutaminase (368 aa).

The Response regulatory domain maps to 9-126 (RVLVVDDSAF…SINMRELKDE (118 aa)). Asp-60 bears the 4-aspartylphosphate mark. Residues 161–354 (SVPARIAVAI…ETVVRAVEMI (194 aa)) enclose the CheB-type methylesterase domain. Residues Ser-173, His-200, and Asp-296 contribute to the active site.

It belongs to the CheB family. Phosphorylated by CheA. Phosphorylation of the N-terminal regulatory domain activates the methylesterase activity.

The protein localises to the cytoplasm. It carries out the reaction [protein]-L-glutamate 5-O-methyl ester + H2O = L-glutamyl-[protein] + methanol + H(+). It catalyses the reaction L-glutaminyl-[protein] + H2O = L-glutamyl-[protein] + NH4(+). Functionally, involved in chemotaxis. Part of a chemotaxis signal transduction system that modulates chemotaxis in response to various stimuli. Catalyzes the demethylation of specific methylglutamate residues introduced into the chemoreceptors (methyl-accepting chemotaxis proteins or MCP) by CheR. Also mediates the irreversible deamidation of specific glutamine residues to glutamic acid. This chain is Protein-glutamate methylesterase/protein-glutamine glutaminase, found in Pyrococcus abyssi (strain GE5 / Orsay).